We begin with the raw amino-acid sequence, 187 residues long: Threonylcarbamoyl-AMP synthase (187 aa).

Residues 3–187 form the YrdC-like domain; sequence NSELLKIIWA…LLNGYLYRKR (185 aa).

It belongs to the SUA5 family. TsaC subfamily.

The protein resides in the cytoplasm. It catalyses the reaction L-threonine + hydrogencarbonate + ATP = L-threonylcarbamoyladenylate + diphosphate + H2O. Functionally, required for the formation of a threonylcarbamoyl group on adenosine at position 37 (t(6)A37) in tRNAs that read codons beginning with adenine. Catalyzes the conversion of L-threonine, HCO(3)(-)/CO(2) and ATP to give threonylcarbamoyl-AMP (TC-AMP) as the acyladenylate intermediate, with the release of diphosphate. The chain is Threonylcarbamoyl-AMP synthase from Riesia pediculicola (strain USDA).